The chain runs to 500 residues: L-arabinose isomerase (500 aa).

Residues Glu-306, Glu-333, His-350, and His-450 each coordinate Mn(2+).

The protein belongs to the arabinose isomerase family. Homohexamer. Requires Mn(2+) as cofactor.

The catalysed reaction is beta-L-arabinopyranose = L-ribulose. Its pathway is carbohydrate degradation; L-arabinose degradation via L-ribulose; D-xylulose 5-phosphate from L-arabinose (bacterial route): step 1/3. Catalyzes the conversion of L-arabinose to L-ribulose. The protein is L-arabinose isomerase of Yersinia pseudotuberculosis serotype O:3 (strain YPIII).